Here is a 510-residue protein sequence, read N- to C-terminus: Bifunctional purine biosynthesis protein PurH (510 aa).

Positions 1-142 constitute an MGS-like domain; sequence MRALISVSDK…KNFKDVLIVT (142 aa).

Belongs to the PurH family.

It catalyses the reaction (6R)-10-formyltetrahydrofolate + 5-amino-1-(5-phospho-beta-D-ribosyl)imidazole-4-carboxamide = 5-formamido-1-(5-phospho-D-ribosyl)imidazole-4-carboxamide + (6S)-5,6,7,8-tetrahydrofolate. It carries out the reaction IMP + H2O = 5-formamido-1-(5-phospho-D-ribosyl)imidazole-4-carboxamide. It participates in purine metabolism; IMP biosynthesis via de novo pathway; 5-formamido-1-(5-phospho-D-ribosyl)imidazole-4-carboxamide from 5-amino-1-(5-phospho-D-ribosyl)imidazole-4-carboxamide (10-formyl THF route): step 1/1. It functions in the pathway purine metabolism; IMP biosynthesis via de novo pathway; IMP from 5-formamido-1-(5-phospho-D-ribosyl)imidazole-4-carboxamide: step 1/1. In Campylobacter curvus (strain 525.92), this protein is Bifunctional purine biosynthesis protein PurH.